A 225-amino-acid polypeptide reads, in one-letter code: MPNETNCTLDFEQSVQLFKEYNLFITAFLLFLTIILQYGYATRSKVIYTLKMIVLWCFWPLNIAVGVISCTYPPNTGGLVAAIILTVFACLSFVGYWIQSIRLFKRCRSWWSFNPESNAVGSILLTNGQQCNFAIESVPMVLSPIIKNGVLYCEGQWLAKCEPDHLPKDIFVCTPDRRNIYRMVQKYTGDQSGNKKRFATFVYAKQSVDTGELESVATGGSSLYT.

Residues 1–20 lie on the Virion surface side of the membrane; it reads MPNETNCTLDFEQSVQLFKE. The helical transmembrane segment at 21-41 threads the bilayer; it reads YNLFITAFLLFLTIILQYGYA. Residues 42–51 are Intravirion-facing; the sequence is TRSKVIYTLK. The chain crosses the membrane as a helical span at residues 52 to 72; sequence MIVLWCFWPLNIAVGVISCTY. Residues 73 to 77 lie on the Virion surface side of the membrane; it reads PPNTG. The chain crosses the membrane as a helical span at residues 78–98; sequence GLVAAIILTVFACLSFVGYWI. Over 99–225 the chain is Intravirion; the sequence is QSIRLFKRCR…VATGGSSLYT (127 aa).

The protein belongs to the gammacoronaviruses M protein family. Homomultimer. Interacts with envelope E protein in the budding compartment of the host cell, which is located between endoplasmic reticulum and the Golgi complex. Forms a complex with HE and S proteins. Interacts with nucleocapsid N protein. This interaction probably participates in RNA packaging into the virus.

Its subcellular location is the virion membrane. The protein resides in the host Golgi apparatus membrane. In terms of biological role, component of the viral envelope that plays a central role in virus morphogenesis and assembly via its interactions with other viral proteins. In Avian infectious bronchitis virus (strain Beaudette) (IBV), this protein is Membrane protein.